The following is a 251-amino-acid chain: Methionine aminopeptidase (251 aa).

His79 is a substrate binding site. 3 residues coordinate a divalent metal cation: Asp96, Asp107, and His170. A substrate-binding site is contributed by His177. Positions 204 and 235 each coordinate a divalent metal cation.

The protein belongs to the peptidase M24A family. Methionine aminopeptidase type 1 subfamily. As to quaternary structure, monomer. It depends on Co(2+) as a cofactor. Zn(2+) is required as a cofactor. The cofactor is Mn(2+). Requires Fe(2+) as cofactor.

The catalysed reaction is Release of N-terminal amino acids, preferentially methionine, from peptides and arylamides.. Functionally, removes the N-terminal methionine from nascent proteins. The N-terminal methionine is often cleaved when the second residue in the primary sequence is small and uncharged (Met-Ala-, Cys, Gly, Pro, Ser, Thr, or Val). Requires deformylation of the N(alpha)-formylated initiator methionine before it can be hydrolyzed. The protein is Methionine aminopeptidase of Borreliella burgdorferi (strain ATCC 35210 / DSM 4680 / CIP 102532 / B31) (Borrelia burgdorferi).